The following is a 747-amino-acid chain: MLPKTLTIWASLASLAVAQSGQVVFAKNADGKFVHSTDDLDQGQRKIRGKFLHITDIHPDPYFHVGAVAEDKCHVDPDHKDSDYPDEDSELVWFRATGKKKHNHHKGKDHEKMPKAGYYGHPLSSCDGPISLMNATFDWIDQNIRDEIDFIIWTGDNVRHDNDNRYPRLEQDIFGYNQIVSSKFHELFRYNETRDGEGHNGGGDPQHPLVIPIIPSLGNNDVFPHNLYLAGPSFQSRRMLQIWSEFVPEAQQHIFSRGSYYFQEVITGKLAVISLNTLYFYKSNPMSDGCDEKTDPGYKHLVWLGVVLDEMRQRGMKVWLSGHVPPVEKNYEDSCHLKLAYWLTEYRDIIVGSVFGHMNIDHFVVMDPKKIEKAQSQDLGTPGLGYKSHVTDFLDVAISASHPVHTFGSIYKRNYIESVREDYSEIPGPKKWLDEYASNFAIAHVSPSVIPNYFPSLRVWEYNITGLGEEIGNPPHPPPSFRAWSDVLEEFERDYAQDVMDEIEVEWFDANSDVIEAEDNDGDDDEDENEDDPEMLTEEAIKEGVANINPETGTLASIFGGLKFWKSSTAVATSSEPESDDYDSDLDAERKKGKKKGKKGKKGKKGKKGKKKKGKKGKKGKKGKRDKSMPPKFPKDLQPGPAYIPQLFTPIGYTQYYANITQFNKEYKKTGASNFEYVVEYTTNDAPYNFEHLTVRNWVELARVLGKNFRDLDLEAEKSKSDQLWKVYMDRAFVGTGAEYLEEPDDD.

Position 1 (M1) is a topological domain, cytoplasmic. A helical; Signal-anchor for type II membrane protein membrane pass occupies residues 2-22 (LPKTLTIWASLASLAVAQSGQ). Topologically, residues 23-747 (VVFAKNADGK…AEYLEEPDDD (725 aa)) are vacuolar. N-linked (GlcNAc...) asparagine glycosylation is found at N134, N191, and N463. The tract at residues 570 to 640 (AVATSSEPES…PKFPKDLQPG (71 aa)) is disordered. Residues 577 to 586 (PESDDYDSDL) are compositionally biased toward acidic residues. Residues 591–625 (KKGKKKGKKGKKGKKGKKGKKKKGKKGKKGKKGKR) show a composition bias toward basic residues. Positions 626–635 (DKSMPPKFPK) are enriched in basic and acidic residues. N-linked (GlcNAc...) asparagine glycosylation is present at N659.

It belongs to the endopolyphosphatase PPN1 family. A divalent metal cation is required as a cofactor. Post-translationally, processing by proteases in the vacuole may be required for activation.

It is found in the vacuole membrane. The catalysed reaction is [phosphate](n+1) + n H2O = (n+1) phosphate + n H(+). Catalyzes the hydrolysis of inorganic polyphosphate (polyP) chains of many hundreds of phosphate residues into shorter lengths. The chain is Endopolyphosphatase (PPN1) from Yarrowia lipolytica (strain CLIB 122 / E 150) (Yeast).